The following is a 389-amino-acid chain: Succinate--CoA ligase [ADP-forming] subunit beta (389 aa).

Residues 9 to 236 (KELFAKHEVP…KDATDPLELK (228 aa)) form the ATP-grasp domain. ATP contacts are provided by residues Lys45, 52–54 (GRG), Ser94, and Glu99. Mg(2+) is bound by residues Asn191 and Asp205. Residues Asn256 and 318–320 (GIT) each bind substrate.

The protein belongs to the succinate/malate CoA ligase beta subunit family. In terms of assembly, heterotetramer of two alpha and two beta subunits. Mg(2+) serves as cofactor.

It catalyses the reaction succinate + ATP + CoA = succinyl-CoA + ADP + phosphate. The catalysed reaction is GTP + succinate + CoA = succinyl-CoA + GDP + phosphate. It participates in carbohydrate metabolism; tricarboxylic acid cycle; succinate from succinyl-CoA (ligase route): step 1/1. Functionally, succinyl-CoA synthetase functions in the citric acid cycle (TCA), coupling the hydrolysis of succinyl-CoA to the synthesis of either ATP or GTP and thus represents the only step of substrate-level phosphorylation in the TCA. The beta subunit provides nucleotide specificity of the enzyme and binds the substrate succinate, while the binding sites for coenzyme A and phosphate are found in the alpha subunit. The polypeptide is Succinate--CoA ligase [ADP-forming] subunit beta (Rhodococcus jostii (strain RHA1)).